The sequence spans 408 residues: 3-phosphoshikimate 1-carboxyvinyltransferase (408 aa).

3-phosphoshikimate contacts are provided by Lys-10, Ser-11, and Arg-15. Lys-10 lines the phosphoenolpyruvate pocket. Residues Gly-79 and Arg-107 each coordinate phosphoenolpyruvate. The 3-phosphoshikimate site is built by Ser-150, Ser-151, Gln-152, Ser-179, Glu-297, and His-324. Residue Gln-152 participates in phosphoenolpyruvate binding. The Proton acceptor role is filled by Glu-297. 3 residues coordinate phosphoenolpyruvate: Arg-328, Arg-369, and Lys-394.

This sequence belongs to the EPSP synthase family. Monomer.

It localises to the cytoplasm. It carries out the reaction 3-phosphoshikimate + phosphoenolpyruvate = 5-O-(1-carboxyvinyl)-3-phosphoshikimate + phosphate. Its pathway is metabolic intermediate biosynthesis; chorismate biosynthesis; chorismate from D-erythrose 4-phosphate and phosphoenolpyruvate: step 6/7. Functionally, catalyzes the transfer of the enolpyruvyl moiety of phosphoenolpyruvate (PEP) to the 5-hydroxyl of shikimate-3-phosphate (S3P) to produce enolpyruvyl shikimate-3-phosphate and inorganic phosphate. This is 3-phosphoshikimate 1-carboxyvinyltransferase from Corynebacterium efficiens (strain DSM 44549 / YS-314 / AJ 12310 / JCM 11189 / NBRC 100395).